The following is a 165-amino-acid chain: Nucleotide-binding protein PMM0481 (165 aa).

This sequence belongs to the YajQ family.

Its function is as follows. Nucleotide-binding protein. This Prochlorococcus marinus subsp. pastoris (strain CCMP1986 / NIES-2087 / MED4) protein is Nucleotide-binding protein PMM0481.